Consider the following 79-residue polypeptide: Dolichyl-diphosphooligosaccharide--protein glycosyltransferase subunit TMEM258 (79 aa).

Helical transmembrane passes span V17–F37 and V59–V79.

This sequence belongs to the OST5 family. As to quaternary structure, component of the oligosaccharyltransferase (OST) complex.

The protein resides in the membrane. It is found in the endoplasmic reticulum. Its subcellular location is the cytoplasm. It functions in the pathway protein modification; protein glycosylation. Its function is as follows. Subunit of the oligosaccharyl transferase (OST) complex that catalyzes the initial transfer of a defined glycan (Glc(3)Man(9)GlcNAc(2) in eukaryotes) from the lipid carrier dolichol-pyrophosphate to an asparagine residue within an Asn-X-Ser/Thr consensus motif in nascent polypeptide chains, the first step in protein N-glycosylation. N-glycosylation occurs cotranslationally and the complex associates with the Sec61 complex at the channel-forming translocon complex that mediates protein translocation across the endoplasmic reticulum (ER). All subunits are required for a maximal enzyme activity. The sequence is that of Dolichyl-diphosphooligosaccharide--protein glycosyltransferase subunit TMEM258 from Danio rerio (Zebrafish).